The chain runs to 302 residues: uncharacterized protein (302 aa).

The active site involves Glu-48.

It belongs to the PhzF family.

This is an uncharacterized protein from Clostridium acetobutylicum (strain ATCC 824 / DSM 792 / JCM 1419 / IAM 19013 / LMG 5710 / NBRC 13948 / NRRL B-527 / VKM B-1787 / 2291 / W).